Reading from the N-terminus, the 276-residue chain is Elongation factor Ts, mitochondrial (276 aa).

This sequence belongs to the EF-Ts family.

It localises to the mitochondrion. Functionally, associates with the EF-Tu.GDP complex and induces the exchange of GDP to GTP. It remains bound to the aminoacyl-tRNA.EF-Tu.GTP complex up to the GTP hydrolysis stage on the ribosome. This Leishmania major protein is Elongation factor Ts, mitochondrial.